A 727-amino-acid chain; its full sequence is Prolyl endopeptidase-like (727 aa).

Residue Met1 is modified to N-acetylmethionine. Residues Ser559, Asp645, and His690 each act as charge relay system in the active site.

It belongs to the peptidase S9A family. In terms of assembly, homodimer. Interacts with the AP-1 complex. As to expression, expressed in pyramidal neurons of the temporal cortex and neocortex (at protein level). Widely expressed. Expressed at higher level in brain, skeletal muscle, heart and kidney. Expressed at the endplates in the neuromuscular junction.

It localises to the cytoplasm. The protein resides in the cytosol. Its subcellular location is the golgi apparatus. The protein localises to the trans-Golgi network. It is found in the cytoskeleton. It localises to the nucleus. Inhibited by PMSF and Prefabloc, as well as leupeptin at high concentrations. Partially inhibited by TPCK, a chymotrypsin inhibitor and E64, a cysteine protease inhibitor. Not affected by 4-amidinophenyl-methanesulfonyl fluoride (APMSF), pepstatin or EDTA. Inhibited by 1-isobutyl-3-oxo-3,5,6,7-tetrahydro-2H-cyclopenta[c]pyridine-4-carbonitrile. Functionally, serine peptidase whose precise substrate specificity remains unclear. Does not cleave peptides after a arginine or lysine residue. Regulates trans-Golgi network morphology and sorting by regulating the membrane binding of the AP-1 complex. May play a role in the regulation of synaptic vesicle exocytosis. The polypeptide is Prolyl endopeptidase-like (PREPL) (Homo sapiens (Human)).